Here is a 317-residue protein sequence, read N- to C-terminus: 2,3-dihydroxyphenylpropionate/2,3-dihydroxicinnamic acid 1,2-dioxygenase (317 aa).

The active-site Proton donor is His115. The active-site Proton acceptor is the His179.

The protein belongs to the LigB/MhpB extradiol dioxygenase family. In terms of assembly, homotetramer. Fe(2+) is required as a cofactor.

It carries out the reaction 3-(2,3-dihydroxyphenyl)propanoate + O2 = (2Z,4E)-2-hydroxy-6-oxonona-2,4-dienedioate + H(+). The enzyme catalyses (2E)-3-(2,3-dihydroxyphenyl)prop-2-enoate + O2 = (2Z,4E,7E)-2-hydroxy-6-oxonona-2,4,7-trienedioate + H(+). Its pathway is aromatic compound metabolism; 3-phenylpropanoate degradation. In terms of biological role, catalyzes the non-heme iron(II)-dependent oxidative cleavage of 2,3-dihydroxyphenylpropionic acid and 2,3-dihydroxicinnamic acid into 2-hydroxy-6-ketononadienedioate and 2-hydroxy-6-ketononatrienedioate, respectively. This is 2,3-dihydroxyphenylpropionate/2,3-dihydroxicinnamic acid 1,2-dioxygenase from Burkholderia vietnamiensis (strain G4 / LMG 22486) (Burkholderia cepacia (strain R1808)).